The primary structure comprises 598 residues: Protein HIGH CHLOROPHYLL FLUORESCENCE PHENOTYPE 173, chloroplastic (598 aa).

Residues 1 to 79 (MVGSIVGSNM…ITTKESEETV (79 aa)) constitute a chloroplast transit peptide. The disordered stretch occupies residues 42 to 106 (VIPRAQSSSS…PTLKLDDVNP (65 aa)). Basic and acidic residues predominate over residues 73-84 (KESEETVAKKLD). The segment covering 87–97 (PPSPQSPPSPP) has biased composition (pro residues).

The protein belongs to the NmrA-type oxidoreductase family. In terms of assembly, component of a high molecular weight complex containing psbA mRNA, OHP1, OHP2 and HCF244, and PSII core proteins D1/D2, HCF136 and HCF173. Interacts with LPE1.

The protein localises to the plastid. It is found in the chloroplast membrane. The protein resides in the chloroplast thylakoid membrane. It localises to the chloroplast stroma. Auxiliary factor required, together with HCF244, for the biogenesis of photosystem II (PSII), especially for the synthesis of the reaction center proteins (e.g. D1), via the regulation of the corresponding mRNA (e.g. psbA) translation initiation (ribosomal loading) and stabilization. This is Protein HIGH CHLOROPHYLL FLUORESCENCE PHENOTYPE 173, chloroplastic from Arabidopsis thaliana (Mouse-ear cress).